A 194-amino-acid chain; its full sequence is Thymidine kinase (194 aa).

ATP contacts are provided by residues 15-22 (GPMFSGKS) and 89-92 (DEAH). The active-site Proton acceptor is the E90. The Zn(2+) site is built by C146, C149, C178, and C181.

This sequence belongs to the thymidine kinase family. In terms of assembly, homotetramer.

It localises to the cytoplasm. The catalysed reaction is thymidine + ATP = dTMP + ADP + H(+). The chain is Thymidine kinase from Metamycoplasma arthritidis (strain 158L3-1) (Mycoplasma arthritidis).